The primary structure comprises 469 residues: Zinc finger CCCH domain-containing protein 30 (469 aa).

The C3H1-type zinc finger occupies 415–443 (VRPMKPCAYFNSPKGCRNGASCTFLHDAS). Residues 444-469 (APTRKDHQKQKGSKRIKLDNTMGGRN) form a disordered region. The segment covering 449–458 (DHQKQKGSKR) has biased composition (basic residues).

This chain is Zinc finger CCCH domain-containing protein 30, found in Oryza sativa subsp. japonica (Rice).